The following is a 292-amino-acid chain: 4-hydroxybenzoate octaprenyltransferase (292 aa).

8 helical membrane passes run 20 to 40 (IGILLLLWPTLWGLWLAADGM), 43 to 63 (PMILVIFILGTILMRSAGCAI), 94 to 114 (LLIAAGLSLCAFLLILPLNLL), 135 to 155 (FFAMPQAYLGIAFSFGIPMAF), 160 to 180 (GTVPPLAWLLVLANLFWVIAY), 209 to 229 (VAGILLCHIIFLSTLTYAGIL), 234 to 254 (IWFYGALLVALGLVIVQYGMI), and 266 to 286 (FLHNNWIGAVIFAGILLDTLF).

The protein belongs to the UbiA prenyltransferase family. Mg(2+) is required as a cofactor.

It localises to the cell inner membrane. It catalyses the reaction all-trans-octaprenyl diphosphate + 4-hydroxybenzoate = 4-hydroxy-3-(all-trans-octaprenyl)benzoate + diphosphate. Its pathway is cofactor biosynthesis; ubiquinone biosynthesis. Its function is as follows. Catalyzes the prenylation of para-hydroxybenzoate (PHB) with an all-trans polyprenyl group. Mediates the second step in the final reaction sequence of ubiquinone-8 (UQ-8) biosynthesis, which is the condensation of the polyisoprenoid side chain with PHB, generating the first membrane-bound Q intermediate 3-octaprenyl-4-hydroxybenzoate. This Nitrosomonas europaea (strain ATCC 19718 / CIP 103999 / KCTC 2705 / NBRC 14298) protein is 4-hydroxybenzoate octaprenyltransferase.